A 156-amino-acid polypeptide reads, in one-letter code: Sec-independent protein translocase protein TatB (156 aa).

The chain crosses the membrane as a helical span at residues 2-22; it reads FSSVGWGEIFLLVVVGLVVIG. Positions 100–156 are disordered; that stretch reads KIMAEGTEGEAQRNKQAADNNANVVERPADGSTARPTQNDPKDGPNYSGGVSWTDII. The span at 113–122 shows a compositional bias: polar residues; it reads NKQAADNNAN.

It belongs to the TatB family. The Tat system comprises two distinct complexes: a TatABC complex, containing multiple copies of TatA, TatB and TatC subunits, and a separate TatA complex, containing only TatA subunits. Substrates initially bind to the TatABC complex, which probably triggers association of the separate TatA complex to form the active translocon.

Its subcellular location is the cell membrane. Functionally, part of the twin-arginine translocation (Tat) system that transports large folded proteins containing a characteristic twin-arginine motif in their signal peptide across membranes. Together with TatC, TatB is part of a receptor directly interacting with Tat signal peptides. TatB may form an oligomeric binding site that transiently accommodates folded Tat precursor proteins before their translocation. This chain is Sec-independent protein translocase protein TatB, found in Corynebacterium glutamicum (strain ATCC 13032 / DSM 20300 / JCM 1318 / BCRC 11384 / CCUG 27702 / LMG 3730 / NBRC 12168 / NCIMB 10025 / NRRL B-2784 / 534).